A 628-amino-acid chain; its full sequence is Phosphomethylpyrimidine synthase (628 aa).

Residues Asn-228, Met-257, Tyr-286, His-322, 342–344 (SRG), 383–386 (DGLR), and Glu-422 contribute to the substrate site. A Zn(2+)-binding site is contributed by His-426. Tyr-449 contacts substrate. His-490 lines the Zn(2+) pocket. 3 residues coordinate [4Fe-4S] cluster: Cys-570, Cys-573, and Cys-578.

This sequence belongs to the ThiC family. In terms of assembly, homodimer. It depends on [4Fe-4S] cluster as a cofactor.

It catalyses the reaction 5-amino-1-(5-phospho-beta-D-ribosyl)imidazole + S-adenosyl-L-methionine = 4-amino-2-methyl-5-(phosphooxymethyl)pyrimidine + CO + 5'-deoxyadenosine + formate + L-methionine + 3 H(+). Its pathway is cofactor biosynthesis; thiamine diphosphate biosynthesis. Functionally, catalyzes the synthesis of the hydroxymethylpyrimidine phosphate (HMP-P) moiety of thiamine from aminoimidazole ribotide (AIR) in a radical S-adenosyl-L-methionine (SAM)-dependent reaction. This is Phosphomethylpyrimidine synthase from Methylibium petroleiphilum (strain ATCC BAA-1232 / LMG 22953 / PM1).